A 543-amino-acid polypeptide reads, in one-letter code: Myotubularin-related protein 9-like (543 aa).

The region spanning 124 to 502 is the Myotubularin phosphatase domain; the sequence is AWHFHPPECY…QSLRLWQGLF (379 aa).

This sequence belongs to the protein-tyrosine phosphatase family. Non-receptor class myotubularin subfamily.

Probable pseudophosphatase. In Bos taurus (Bovine), this protein is Myotubularin-related protein 9-like.